The primary structure comprises 363 residues: tRNA(Met) cytidine acetate ligase (363 aa).

ATP-binding positions include 7 to 20, glycine 96, asparagine 152, and arginine 175; that span reads IAEF…HKYL.

This sequence belongs to the TmcAL family.

Its subcellular location is the cytoplasm. It catalyses the reaction cytidine(34) in elongator tRNA(Met) + acetate + ATP = N(4)-acetylcytidine(34) in elongator tRNA(Met) + AMP + diphosphate. Functionally, catalyzes the formation of N(4)-acetylcytidine (ac(4)C) at the wobble position of elongator tRNA(Met), using acetate and ATP as substrates. First activates an acetate ion to form acetyladenylate (Ac-AMP) and then transfers the acetyl group to tRNA to form ac(4)C34. In Streptococcus thermophilus (strain ATCC BAA-250 / LMG 18311), this protein is tRNA(Met) cytidine acetate ligase.